A 497-amino-acid polypeptide reads, in one-letter code: Indoleacetaldoxime dehydratase (497 aa).

Residues 2–20 (EMILSISLCLTTLITLLLL) traverse the membrane as a helical segment. Cys-439 lines the heme pocket.

It belongs to the cytochrome P450 family.

Its subcellular location is the membrane. The enzyme catalyses (E)-(indol-3-yl)acetaldehyde oxime = (indol-3-yl)acetonitrile + H2O. Involved in the biosynthesis of the indole-derived phytoalexin camalexin. Catalyzes the conversion of indole-3-acetaldoxime to indole-3-acetonitrile. Required for resistance to A.brassicicola and B.cinerea. The protein is Indoleacetaldoxime dehydratase (CYP71A13) of Arabidopsis thaliana (Mouse-ear cress).